Here is a 292-residue protein sequence, read N- to C-terminus: Probable serine/threonine-protein kinase FPV226 (292 aa).

Residues 14–292 (WKIDKLIGCG…DLLRQLVNSL (279 aa)) form the Protein kinase domain. Residues 20–28 (IGCGGFGCV) and lysine 43 each bind ATP. The active-site Proton acceptor is the aspartate 147.

Belongs to the protein kinase superfamily. Ser/Thr protein kinase family. Poxviruses subfamily.

It carries out the reaction L-seryl-[protein] + ATP = O-phospho-L-seryl-[protein] + ADP + H(+). It catalyses the reaction L-threonyl-[protein] + ATP = O-phospho-L-threonyl-[protein] + ADP + H(+). In Vertebrata (FPV), this protein is Probable serine/threonine-protein kinase FPV226.